A 340-amino-acid polypeptide reads, in one-letter code: GTP 3',8-cyclase (340 aa).

In terms of domain architecture, Radical SAM core spans 8–227; that stretch reads KLGRPIRDLR…TMIEQHFEID (220 aa). Position 17 (R17) interacts with GTP. [4Fe-4S] cluster-binding residues include C24 and C28. Y30 serves as a coordination point for S-adenosyl-L-methionine. C31 contacts [4Fe-4S] cluster. Residue R71 participates in GTP binding. G75 lines the S-adenosyl-L-methionine pocket. T102 serves as a coordination point for GTP. An S-adenosyl-L-methionine-binding site is contributed by S126. Residue K163 participates in GTP binding. M197 provides a ligand contact to S-adenosyl-L-methionine. C261 and C264 together coordinate [4Fe-4S] cluster. 266–268 provides a ligand contact to GTP; that stretch reads RAR. C278 contributes to the [4Fe-4S] cluster binding site.

This sequence belongs to the radical SAM superfamily. MoaA family. In terms of assembly, monomer and homodimer. [4Fe-4S] cluster serves as cofactor.

It catalyses the reaction GTP + AH2 + S-adenosyl-L-methionine = (8S)-3',8-cyclo-7,8-dihydroguanosine 5'-triphosphate + 5'-deoxyadenosine + L-methionine + A + H(+). It functions in the pathway cofactor biosynthesis; molybdopterin biosynthesis. In terms of biological role, catalyzes the cyclization of GTP to (8S)-3',8-cyclo-7,8-dihydroguanosine 5'-triphosphate. In Staphylococcus aureus (strain USA300), this protein is GTP 3',8-cyclase.